A 456-amino-acid polypeptide reads, in one-letter code: Peptide chain release factor PrfB1, chloroplastic (456 aa).

Residues 1-58 (MSMELTVLGPLAGRSFAIAGKPKLLLLRPTNLPLLRLSLPLSLPNFSSSSRFNSPIVF) constitute a chloroplast transit peptide.

This sequence belongs to the prokaryotic/mitochondrial release factor family. Expressed in leaves, stems and flowers.

It is found in the plastid. It localises to the chloroplast stroma. Functionally, directs the termination of translation in response to the peptide chain termination codon UGA. Required for the proper translation, stability and normal processing of UGA-containing polycistronic transcripts in chloroplasts. In Arabidopsis thaliana (Mouse-ear cress), this protein is Peptide chain release factor PrfB1, chloroplastic.